A 466-amino-acid chain; its full sequence is tRNA-2-methylthio-N(6)-dimethylallyladenosine synthase (466 aa).

Residues 22–139 enclose the MTTase N-terminal domain; the sequence is RRYYVWTVGC…VVALAPNPIY (118 aa). Residues cysteine 31, cysteine 67, cysteine 101, cysteine 166, cysteine 170, and cysteine 173 each coordinate [4Fe-4S] cluster. Residues 152 to 386 enclose the Radical SAM core domain; that stretch reads SHPPVSVHVP…EQLQEQIATE (235 aa). Residues 389–449 form the TRAM domain; that stretch reads ARFLGQTVEV…PWSLQGVPQL (61 aa).

The protein belongs to the methylthiotransferase family. MiaB subfamily. Monomer. [4Fe-4S] cluster serves as cofactor.

The protein localises to the cytoplasm. It carries out the reaction N(6)-dimethylallyladenosine(37) in tRNA + (sulfur carrier)-SH + AH2 + 2 S-adenosyl-L-methionine = 2-methylsulfanyl-N(6)-dimethylallyladenosine(37) in tRNA + (sulfur carrier)-H + 5'-deoxyadenosine + L-methionine + A + S-adenosyl-L-homocysteine + 2 H(+). Functionally, catalyzes the methylthiolation of N6-(dimethylallyl)adenosine (i(6)A), leading to the formation of 2-methylthio-N6-(dimethylallyl)adenosine (ms(2)i(6)A) at position 37 in tRNAs that read codons beginning with uridine. In Chloroflexus aurantiacus (strain ATCC 29366 / DSM 635 / J-10-fl), this protein is tRNA-2-methylthio-N(6)-dimethylallyladenosine synthase.